We begin with the raw amino-acid sequence, 701 residues long: Elongation factor G (701 aa).

In terms of domain architecture, tr-type G spans 8-290; the sequence is ERYRNIGISA…AVVDYLPAPT (283 aa). Residues 17–24, 88–92, and 142–145 each bind GTP; these read AHIDAGKT, DTPGH, and NKMD.

Belongs to the TRAFAC class translation factor GTPase superfamily. Classic translation factor GTPase family. EF-G/EF-2 subfamily.

It is found in the cytoplasm. Catalyzes the GTP-dependent ribosomal translocation step during translation elongation. During this step, the ribosome changes from the pre-translocational (PRE) to the post-translocational (POST) state as the newly formed A-site-bound peptidyl-tRNA and P-site-bound deacylated tRNA move to the P and E sites, respectively. Catalyzes the coordinated movement of the two tRNA molecules, the mRNA and conformational changes in the ribosome. In Aeromonas hydrophila subsp. hydrophila (strain ATCC 7966 / DSM 30187 / BCRC 13018 / CCUG 14551 / JCM 1027 / KCTC 2358 / NCIMB 9240 / NCTC 8049), this protein is Elongation factor G.